The primary structure comprises 96 residues: Large ribosomal subunit protein uL18m (96 aa).

Belongs to the universal ribosomal protein uL18 family.

Its subcellular location is the mitochondrion. The chain is Large ribosomal subunit protein uL18m (RPL18) from Reclinomonas americana.